Consider the following 212-residue polypeptide: ATP phosphoribosyltransferase (212 aa).

It belongs to the ATP phosphoribosyltransferase family. Short subfamily. As to quaternary structure, heteromultimer composed of HisG and HisZ subunits.

Its subcellular location is the cytoplasm. The catalysed reaction is 1-(5-phospho-beta-D-ribosyl)-ATP + diphosphate = 5-phospho-alpha-D-ribose 1-diphosphate + ATP. The protein operates within amino-acid biosynthesis; L-histidine biosynthesis; L-histidine from 5-phospho-alpha-D-ribose 1-diphosphate: step 1/9. Its function is as follows. Catalyzes the condensation of ATP and 5-phosphoribose 1-diphosphate to form N'-(5'-phosphoribosyl)-ATP (PR-ATP). Has a crucial role in the pathway because the rate of histidine biosynthesis seems to be controlled primarily by regulation of HisG enzymatic activity. The chain is ATP phosphoribosyltransferase (hisG) from Halalkalibacterium halodurans (strain ATCC BAA-125 / DSM 18197 / FERM 7344 / JCM 9153 / C-125) (Bacillus halodurans).